The sequence spans 390 residues: Enoyl-[acyl-carrier-protein] reductase [NADH], chloroplastic (390 aa).

Residues 1–74 (MAATAASSLQ…CKRPFSFSTR (74 aa)) constitute a chloroplast transit peptide. 2 residues coordinate NADP(+): Leu53 and Asn170. The active-site Proton donor is Ser239. NADP(+) is bound by residues Lys282 and Ser314. Lys282 (lowers pKa of active site Tyr) is an active-site residue.

It belongs to the short-chain dehydrogenases/reductases (SDR) family. FabI subfamily. As to quaternary structure, homotetramer. As to expression, expressed in flowers and siliques and at lower levels in roots and leaves (at protein level).

It localises to the plastid. It is found in the chloroplast. It carries out the reaction a 2,3-saturated acyl-[ACP] + NAD(+) = a (2E)-enoyl-[ACP] + NADH + H(+). It functions in the pathway lipid metabolism; fatty acid biosynthesis. Inhibited by the phytotoxin cyperin and the synthetic antimicrobial compound triclosan. In terms of biological role, catalyzes the NAD-dependent reduction of a carbon-carbon double bond in an enoyl moiety that is covalently linked to an acyl carrier protein (ACP). Catalyzes the last reduction step in the de novo synthesis cycle of fatty acids. Involved in the elongation cycle of fatty acids which are used in lipid metabolism. Required for normal plant growth. The sequence is that of Enoyl-[acyl-carrier-protein] reductase [NADH], chloroplastic (MOD1) from Arabidopsis thaliana (Mouse-ear cress).